The primary structure comprises 96 residues: Co-chaperonin GroES (96 aa).

It belongs to the GroES chaperonin family. Heptamer of 7 subunits arranged in a ring. Interacts with the chaperonin GroEL.

Its subcellular location is the cytoplasm. In terms of biological role, together with the chaperonin GroEL, plays an essential role in assisting protein folding. The GroEL-GroES system forms a nano-cage that allows encapsulation of the non-native substrate proteins and provides a physical environment optimized to promote and accelerate protein folding. GroES binds to the apical surface of the GroEL ring, thereby capping the opening of the GroEL channel. The polypeptide is Co-chaperonin GroES (Histophilus somni (strain 129Pt) (Haemophilus somnus)).